Here is a 394-residue protein sequence, read N- to C-terminus: MSKEKFERTKPHVNVGTIGHVDHGKTTLTAAITTVLAKTYGGSARAFDQIDNAPEEKARGITINTSHVEYDTPTRHYAHVDCPGHADYVKNMITGAAQMDGAILVVAATDGPMPQTREHILLGRQVGVPFIIVFMNKCDMVDDEELLELVEMEVRELLSAYDFPGDDLPVVRGSALKALEGEAEWEAKIIELAGYLDSYIPEPERAIDKPFLLPIEDVFSISGRGTVVTGRVERGIVKVGEEVEIVGIKDTVKSTCTGVEMFRKLLDEGRAGENVGVLLRGIKREDIERGQVLAKPGSIKPHTQFDSEVYILSKDEGGRHTPFFKGYRPQFYFRTTDVTGTIELPEGVEMVMPGDNVNMKVTLIHPIAMDDGLRFAIREGGRTVGAGVVAKVIA.

The tr-type G domain maps to 10–204; the sequence is KPHVNVGTIG…YLDSYIPEPE (195 aa). Residues 19–26 form a G1 region; it reads GHVDHGKT. GTP is bound at residue 19 to 26; sequence GHVDHGKT. Threonine 26 lines the Mg(2+) pocket. The segment at 60–64 is G2; the sequence is GITIN. Residues 81-84 are G3; sequence DCPG. Residues 81–85 and 136–139 each bind GTP; these read DCPGH and NKCD. The segment at 136–139 is G4; that stretch reads NKCD. The segment at 174-176 is G5; it reads SAL.

This sequence belongs to the TRAFAC class translation factor GTPase superfamily. Classic translation factor GTPase family. EF-Tu/EF-1A subfamily. Monomer.

The protein localises to the cytoplasm. The catalysed reaction is GTP + H2O = GDP + phosphate + H(+). Functionally, GTP hydrolase that promotes the GTP-dependent binding of aminoacyl-tRNA to the A-site of ribosomes during protein biosynthesis. This Serratia proteamaculans (strain 568) protein is Elongation factor Tu 1.